The chain runs to 262 residues: MKHILLTNDDGYDSVGLKALIDALSPIAKITVVAPANNKSACGHSLTLDKPLRLISIKDDFYKIDDGSPTDCIFLSLGNLFKEGFKPDLVISGINIGANMGEDITYSGTASAAMEAVIHKIPAIAISQVCQNRCQDIQNGWEFELAKDTIVKLATRILNNSFPLDERKFLNVNIPPIKPNECKGMKITKAGFREYGTDSDRHINPRGEEYYWIGLHPLIWKASEDQSCDFEAIKENYVSISPIKLDMTSYDDLKNLENWLNN.

A divalent metal cation contacts are provided by aspartate 9, aspartate 10, serine 40, and asparagine 95.

This sequence belongs to the SurE nucleotidase family. Requires a divalent metal cation as cofactor.

It localises to the cytoplasm. The catalysed reaction is a ribonucleoside 5'-phosphate + H2O = a ribonucleoside + phosphate. Its function is as follows. Nucleotidase that shows phosphatase activity on nucleoside 5'-monophosphates. The chain is 5'-nucleotidase SurE from Aliarcobacter butzleri (strain RM4018) (Arcobacter butzleri).